We begin with the raw amino-acid sequence, 475 residues long: Ribulose bisphosphate carboxylase large chain (475 aa).

A propeptide spanning residues 1–2 (MS) is cleaved from the precursor. Proline 3 bears the N-acetylproline mark. Residue lysine 14 is modified to N6,N6,N6-trimethyllysine. Residues asparagine 123 and threonine 173 each contribute to the substrate site. The Proton acceptor role is filled by lysine 175. Lysine 177 lines the substrate pocket. Lysine 201, aspartate 203, and glutamate 204 together coordinate Mg(2+). Residue lysine 201 is modified to N6-carboxylysine. Histidine 294 serves as the catalytic Proton acceptor. Substrate-binding residues include arginine 295, histidine 327, and serine 379.

It belongs to the RuBisCO large chain family. Type I subfamily. In terms of assembly, heterohexadecamer of 8 large chains and 8 small chains; disulfide-linked. The disulfide link is formed within the large subunit homodimers. It depends on Mg(2+) as a cofactor. Post-translationally, the disulfide bond which can form in the large chain dimeric partners within the hexadecamer appears to be associated with oxidative stress and protein turnover.

It is found in the plastid. Its subcellular location is the chloroplast. The enzyme catalyses 2 (2R)-3-phosphoglycerate + 2 H(+) = D-ribulose 1,5-bisphosphate + CO2 + H2O. It catalyses the reaction D-ribulose 1,5-bisphosphate + O2 = 2-phosphoglycolate + (2R)-3-phosphoglycerate + 2 H(+). In terms of biological role, ruBisCO catalyzes two reactions: the carboxylation of D-ribulose 1,5-bisphosphate, the primary event in carbon dioxide fixation, as well as the oxidative fragmentation of the pentose substrate in the photorespiration process. Both reactions occur simultaneously and in competition at the same active site. The protein is Ribulose bisphosphate carboxylase large chain of Nandina domestica (Heavenly bamboo).